Here is a 446-residue protein sequence, read N- to C-terminus: Na(+)/H(+) antiporter NhaA (446 aa).

Helical transmembrane passes span G23–G43, L73–I93, L109–M129, G138–G158, V167–F187, S193–F213, W219–A239, M314–A334, V348–I368, W381–I401, and G419–L439.

This sequence belongs to the NhaA Na(+)/H(+) (TC 2.A.33) antiporter family.

Its subcellular location is the cell inner membrane. The catalysed reaction is Na(+)(in) + 2 H(+)(out) = Na(+)(out) + 2 H(+)(in). Na(+)/H(+) antiporter that extrudes sodium in exchange for external protons. In Phocaeicola vulgatus (strain ATCC 8482 / DSM 1447 / JCM 5826 / CCUG 4940 / NBRC 14291 / NCTC 11154) (Bacteroides vulgatus), this protein is Na(+)/H(+) antiporter NhaA.